Here is a 675-residue protein sequence, read N- to C-terminus: MAGPAPPVADELPGPAARRLYSRMEASCLELALEGERLCKAGDFKTGVAFFEAAVQVGTEDLKTLSAIYSQLGNAYFYLKEHGRALEYHKHDLLLARTIGDRMGEAKASGNLGNTLKVLGRFDEAAVCCQRHLSIAQEQGDKVGEARALYNIGNVYHAKGKQLSWNAANATQDPGHLPPDVRETLCKASEFYERNLSLVKELGDRAAQGRAYGNLGNTHYLLGNFTEATTFHKERLAIAKEFGDKAAERRAYSNLGNAHVFLGRFDVAAEYYKKTLQLSRQLRDQAVEAQACYSLGNTYTLLQDYERAAEYHLRHLLIAQELADRVGEGRACWSLGNAYVSMGRPAQALTFAKKHLQISQEIGDRHGELTARMNVAQLQLVLGRLTSPAASEKPDLAGYEAQGARPKRTQRLSAETWDLLRLPLEREQNGDSHHSGDWRGPSRDSLPLPVRSRKYQEGPDAERRPREGSHSPLDSADVRVHVPRTSIPRAPSSDEECFFDLLTKFQSSRMDDQRCPLDDGQAGAAEATAAPTLEDRIAQPSMTASPQTEEFFDLIASSQSRRLDDQRASVGSLPGLRITHSNAGHLRGHGEPQEPGDDFFNMLIKYQSSRIDDQRCPPPDVLPRGPTMPDEDFFSLIQRVQAKRMDEQRVDLAGGPEQGAGGPPEPQQQCQPGAS.

Residues 1-509 form a mediates association with membranes region; the sequence is MAGPAPPVAD…DLLTKFQSSR (509 aa). TPR repeat units follow at residues 28-61, 66-99, 106-139, 146-181, 183-202, 209-242, 249-282, 289-322, and 329-362; these read CLEL…GTED, SAIY…ARTI, AKAS…AQEQ, ARAL…PPDV, ETLC…VKEL, GRAY…AKEF, RRAY…SRQL, AQAC…AQEL, and GRAC…SQEI. Positions 364–487 are interaction with STK11/LKB1; it reads DRHGELTARM…VRVHVPRTSI (124 aa). The segment at 391-412 is disordered; the sequence is SEKPDLAGYEAQGARPKRTQRL. Ser-413 carries the post-translational modification Phosphoserine. An Omega-N-methylarginine modification is found at Arg-421. Residues 424–442 are compositionally biased toward basic and acidic residues; the sequence is LEREQNGDSHHSGDWRGPS. A disordered region spans residues 424-492; sequence LEREQNGDSH…PRTSIPRAPS (69 aa). Residues Ser-445, Ser-469, Ser-471, Ser-492, and Ser-493 each carry the phosphoserine modification. Residues 454 to 469 show a composition bias toward basic and acidic residues; the sequence is KYQEGPDAERRPREGS. Residues 495–517 enclose the GoLoco 1 domain; sequence EECFFDLLTKFQSSRMDDQRCPL. Phosphoserine is present on residues Ser-545 and Ser-569. 3 GoLoco domains span residues 548-570, 596-618, and 630-652; these read TEEF…RASV, GDDF…RCPP, and DEDF…RVDL. Disordered regions lie at residues 610–630 and 644–675; these read RIDD…TMPD and RMDE…PGAS.

Belongs to the GPSM family. As to quaternary structure, interacts with GNAI1, GNAI2 and GNAI3 preferentially in their GDP-bound state. May also interact with GNAO1. Interacts with STK11/LKB1 and MACF1. Interacts with INSC/inscuteable and FRMPD1. Post-translationally, phosphorylation regulates interaction with G(i/o) alpha. As to expression, expressed in intestinal cells.

The protein resides in the cytoplasm. It localises to the cytosol. It is found in the endoplasmic reticulum membrane. The protein localises to the golgi apparatus membrane. Its subcellular location is the cell membrane. In terms of biological role, guanine nucleotide dissociation inhibitor (GDI) which functions as a receptor-independent activator of heterotrimeric G-protein signaling. Keeps G(i/o) alpha subunit in its GDP-bound form thus uncoupling heterotrimeric G-proteins signaling from G protein-coupled receptors. Controls spindle orientation and asymmetric cell fate of cerebral cortical progenitors. May also be involved in macroautophagy in intestinal cells. May play a role in drug addiction. In Homo sapiens (Human), this protein is G-protein-signaling modulator 1 (GPSM1).